Here is a 491-residue protein sequence, read N- to C-terminus: Lysine--tRNA ligase (491 aa).

Mg(2+) contacts are provided by E400 and E407.

The protein belongs to the class-II aminoacyl-tRNA synthetase family. As to quaternary structure, homodimer. It depends on Mg(2+) as a cofactor.

It is found in the cytoplasm. It carries out the reaction tRNA(Lys) + L-lysine + ATP = L-lysyl-tRNA(Lys) + AMP + diphosphate. This Mesomycoplasma hyopneumoniae (strain J / ATCC 25934 / NCTC 10110) (Mycoplasma hyopneumoniae) protein is Lysine--tRNA ligase.